A 506-amino-acid chain; its full sequence is Cobyric acid synthase (506 aa).

A GATase cobBQ-type domain is found at 251 to 448 (DITIAIVQLP…LHGLFDSDAF (198 aa)). Cys332 acts as the Nucleophile in catalysis. The active site involves His440.

It belongs to the CobB/CobQ family. CobQ subfamily.

It functions in the pathway cofactor biosynthesis; adenosylcobalamin biosynthesis. Its function is as follows. Catalyzes amidations at positions B, D, E, and G on adenosylcobyrinic A,C-diamide. NH(2) groups are provided by glutamine, and one molecule of ATP is hydrogenolyzed for each amidation. This chain is Cobyric acid synthase, found in Salmonella choleraesuis (strain SC-B67).